The following is a 100-amino-acid chain: Urease subunit gamma (100 aa).

Belongs to the urease gamma subunit family. In terms of assembly, heterotrimer of UreA (gamma), UreB (beta) and UreC (alpha) subunits. Three heterotrimers associate to form the active enzyme.

The protein localises to the cytoplasm. The enzyme catalyses urea + 2 H2O + H(+) = hydrogencarbonate + 2 NH4(+). Its pathway is nitrogen metabolism; urea degradation; CO(2) and NH(3) from urea (urease route): step 1/1. This is Urease subunit gamma from Methylobacillus flagellatus (strain ATCC 51484 / DSM 6875 / VKM B-1610 / KT).